The primary structure comprises 145 residues: Large ribosomal subunit protein uL15 (145 aa).

A compositionally biased stretch (basic and acidic residues) spans 1 to 13 (MNLHELKYNEGAR). A disordered region spans residues 1–56 (MNLHELKYNEGARKEKHRVGRGHAAGKGKQAGKGQSGQLKRTGSKPGFEGGQNPWY). The segment covering 14 to 26 (KEKHRVGRGHAAG) has biased composition (basic residues).

Belongs to the universal ribosomal protein uL15 family. Part of the 50S ribosomal subunit.

Binds to the 23S rRNA. The polypeptide is Large ribosomal subunit protein uL15 (Mycoplasma mobile (strain ATCC 43663 / 163K / NCTC 11711) (Mesomycoplasma mobile)).